A 524-amino-acid chain; its full sequence is MNQAVRFRPVITFALAFILIITWFAPRADAAAQWQAGTAYKQGDLVTYLNKDYECIQPHTALTGWEPSNVPALWKYVGEGTGGGTPTPDTTPPTVPAGLTSSLVTDTSVNLTWNASTDNVGVTGYEVYRNGTLVANTSTTTAVVTGLTAGTTYVFTVKAKDAAGNLSAASTSLSVTTSTGSSNPGPSGSKWLIGYWHNFDNGSTNIKLRNVSTAYDVINVSFAEPISPGSGTLAFTPYNATVEEFKSDIAYLQSQGKKVLISMGGANGRIELTDATKKRQQFEDSLKSIISTYGFNGLDIDLEGSSLSLNAGDTDFRSPTTPKIVNLINGVKALKSHFGANFVLTAAPETAYVQGGYLNYGGPWGAYLPVIHALRNDLTLLHVQHYNTGSMVGLDGRSYAQGTADFHVAMAQMLLQGFNVGGSSGPFFSPLRPDQIAIGVPASQQAAGGGYTAPAELQKALNYLIKGVSYGGSYTLRQPAGYVGLKGIMTWSINWDAYTNNQFSNAHRPFLNGLSTQKTEEVVY.

An N-terminal signal peptide occupies residues 1 to 30; the sequence is MNQAVRFRPVITFALAFILIITWFAPRADA. The 86-residue stretch at 95 to 180 folds into the Fibronectin type-III domain; the sequence is VPAGLTSSLV…TSLSVTTSTG (86 aa). One can recognise a GH18 domain in the interval 190-514; sequence KWLIGYWHNF…NAHRPFLNGL (325 aa). The active-site Proton donor is the Glu303.

The protein belongs to the glycosyl hydrolase 18 family. Chitinase class II subfamily.

The enzyme catalyses Random endo-hydrolysis of N-acetyl-beta-D-glucosaminide (1-&gt;4)-beta-linkages in chitin and chitodextrins.. This Niallia circulans (Bacillus circulans) protein is Chitinase D (chiD).